We begin with the raw amino-acid sequence, 226 residues long: UPF0758 protein LL1007 (226 aa).

The 123-residue stretch at 103 to 225 folds into the MPN domain; the sequence is QVLSSREYGL…YFSFREEEIR (123 aa). Zn(2+) is bound by residues His174, His176, and Asp187. Positions 174–187 match the JAMM motif motif; the sequence is HNHPSGNLKPSQAD.

It belongs to the UPF0758 family.

The protein is UPF0758 protein LL1007 of Lactococcus lactis subsp. lactis (strain IL1403) (Streptococcus lactis).